The primary structure comprises 151 residues: Deoxyuridine 5'-triphosphate nucleotidohydrolase (151 aa).

Substrate-binding positions include 70–72, Asn83, 87–89, and Lys97; these read RSG and LID.

The protein belongs to the dUTPase family. Mg(2+) is required as a cofactor.

The enzyme catalyses dUTP + H2O = dUMP + diphosphate + H(+). Its pathway is pyrimidine metabolism; dUMP biosynthesis; dUMP from dCTP (dUTP route): step 2/2. In terms of biological role, this enzyme is involved in nucleotide metabolism: it produces dUMP, the immediate precursor of thymidine nucleotides and it decreases the intracellular concentration of dUTP so that uracil cannot be incorporated into DNA. This Idiomarina loihiensis (strain ATCC BAA-735 / DSM 15497 / L2-TR) protein is Deoxyuridine 5'-triphosphate nucleotidohydrolase.